A 155-amino-acid chain; its full sequence is 6,7-dimethyl-8-ribityllumazine synthase (155 aa).

Residues phenylalanine 23, alanine 57 to glutamate 59, and alanine 81 to isoleucine 83 each bind 5-amino-6-(D-ribitylamino)uracil. Position 86-87 (serine 86–threonine 87) interacts with (2S)-2-hydroxy-3-oxobutyl phosphate. Histidine 89 acts as the Proton donor in catalysis. Phenylalanine 114 provides a ligand contact to 5-amino-6-(D-ribitylamino)uracil. A (2S)-2-hydroxy-3-oxobutyl phosphate-binding site is contributed by arginine 128.

This sequence belongs to the DMRL synthase family.

It carries out the reaction (2S)-2-hydroxy-3-oxobutyl phosphate + 5-amino-6-(D-ribitylamino)uracil = 6,7-dimethyl-8-(1-D-ribityl)lumazine + phosphate + 2 H2O + H(+). It participates in cofactor biosynthesis; riboflavin biosynthesis; riboflavin from 2-hydroxy-3-oxobutyl phosphate and 5-amino-6-(D-ribitylamino)uracil: step 1/2. In terms of biological role, catalyzes the formation of 6,7-dimethyl-8-ribityllumazine by condensation of 5-amino-6-(D-ribitylamino)uracil with 3,4-dihydroxy-2-butanone 4-phosphate. This is the penultimate step in the biosynthesis of riboflavin. The chain is 6,7-dimethyl-8-ribityllumazine synthase from Dehalococcoides mccartyi (strain ATCC BAA-2266 / KCTC 15142 / 195) (Dehalococcoides ethenogenes (strain 195)).